The primary structure comprises 74 residues: UPF0154 protein OB1676 (74 aa).

Residues 4-24 (IWVVLIAIAALVAGVALGFFI) form a helical membrane-spanning segment.

Belongs to the UPF0154 family.

Its subcellular location is the membrane. This chain is UPF0154 protein OB1676, found in Oceanobacillus iheyensis (strain DSM 14371 / CIP 107618 / JCM 11309 / KCTC 3954 / HTE831).